The chain runs to 538 residues: Dolichol kinase (538 aa).

The Lumenal portion of the chain corresponds to 1 to 13 (MTRECPSPAPGPG). A helical transmembrane segment spans residues 14–34 (APLSGSVLAEAAVVFAVVLSI). Topologically, residues 35-74 (HATVWDRYSWCAVALAVQAFYVQYKWDRLLQQGSAVFQFR) are cytoplasmic. The helical transmembrane segment at 75–95 (MSANSGLLPASMVMPLLGLVM) threads the bilayer. The Lumenal segment spans residues 96 to 111 (KERCQTAGNPFFERFG). The helical transmembrane segment at 112 to 132 (IVVAATGMAVALFSSVLALGI) threads the bilayer. The Cytoplasmic segment spans residues 133-134 (TR). The helical transmembrane segment at 135-155 (PVPTNTCVILGLAGGVIIYIM) threads the bilayer. Topologically, residues 156–163 (KHSLSVGE) are lumenal. Residues 164-184 (VIEVLEVLLIFVYLNMILLYL) form a helical membrane-spanning segment. Residues 185–188 (LPRC) lie on the Cytoplasmic side of the membrane. The helical transmembrane segment at 189–209 (FTPGEALLVLGGISFVLNQLI) threads the bilayer. The Lumenal segment spans residues 210-224 (KRSLTLVESQGDPVD). Residues 225–245 (FFLLVVVVGMVLMGIFFSTLF) traverse the membrane as a helical segment. Over 246 to 254 (VFMDSGTWA) the chain is Cytoplasmic. The helical transmembrane segment at 255-275 (SSIFFHLMTCVLSLGVVLPWL) threads the bilayer. Topologically, residues 276 to 297 (HRLIRRNPLLWLLQFLFQTDTR) are lumenal. Residues 298–318 (IYLLAYWSLLATLACLVVLYQ) traverse the membrane as a helical segment. Residues 319 to 337 (NAKRSSSESKKHQAPTIAR) lie on the Cytoplasmic side of the membrane. The helical transmembrane segment at 338 to 354 (KYFHLIVVATYIPGIIF) threads the bilayer. At 355-359 (DRPLL) the chain is on the lumenal side. The chain crosses the membrane as a helical span at residues 360–380 (YVAATVCLAVFIFLEYVRYFR). At 381-401 (IKPLGHTLRSFLSLFLDERDS) the chain is on the cytoplasmic side. Residues 402 to 422 (GPLILTHIYLLLGMSLPIWLI) traverse the membrane as a helical segment. Residues 423-436 (PRPCTQKGSLGGAR) are Lumenal-facing. A helical membrane pass occupies residues 437–457 (ALVPYAGVLAVGVGDTVASIF). At 458 to 472 (GSTMGEIRWPGTKKT) the chain is on the cytoplasmic side. A CTP-binding region spans residues 459–474 (STMGEIRWPGTKKTFE). Residues 473–493 (FEGTMTSIFAQIISVALILIF) form a helical membrane-spanning segment. The Lumenal segment spans residues 494–495 (DS). Residues 496-516 (GVDLNYSYAWILGSISTVSLL) traverse the membrane as a helical segment. Topologically, residues 517 to 538 (EAYTTQIDNLLLPLYLLILLMA) are cytoplasmic.

Belongs to the polyprenol kinase family. In terms of tissue distribution, ubiquitous.

Its subcellular location is the endoplasmic reticulum membrane. The catalysed reaction is a di-trans,poly-cis-dolichol + CTP = a di-trans,poly-cis-dolichyl phosphate + CDP + H(+). It participates in protein modification; protein glycosylation. In terms of biological role, catalyzes CTP-mediated phosphorylation of dolichol, the terminal step in de novo dolichyl monophosphate (Dol-P) biosynthesis. Dol-P is a lipid carrier essential for the synthesis of N-linked and O-linked oligosaccharides and for GPI anchors. The protein is Dolichol kinase (DOLK) of Homo sapiens (Human).